Here is a 110-residue protein sequence, read N- to C-terminus: Phosphoribosyl-AMP cyclohydrolase (110 aa).

Aspartate 80 provides a ligand contact to Mg(2+). Cysteine 81 provides a ligand contact to Zn(2+). 2 residues coordinate Mg(2+): aspartate 82 and aspartate 84. 2 residues coordinate Zn(2+): cysteine 97 and cysteine 104.

It belongs to the PRA-CH family. Homodimer. It depends on Mg(2+) as a cofactor. Requires Zn(2+) as cofactor.

It localises to the cytoplasm. The enzyme catalyses 1-(5-phospho-beta-D-ribosyl)-5'-AMP + H2O = 1-(5-phospho-beta-D-ribosyl)-5-[(5-phospho-beta-D-ribosylamino)methylideneamino]imidazole-4-carboxamide. Its pathway is amino-acid biosynthesis; L-histidine biosynthesis; L-histidine from 5-phospho-alpha-D-ribose 1-diphosphate: step 3/9. Functionally, catalyzes the hydrolysis of the adenine ring of phosphoribosyl-AMP. The protein is Phosphoribosyl-AMP cyclohydrolase of Clostridium botulinum (strain 657 / Type Ba4).